We begin with the raw amino-acid sequence, 167 residues long: Telethonin (167 aa).

Ser-39 is subject to Phosphoserine. A disordered region spans residues 142–167 (PVVPVSKPGPLRRTLSRSMSQEAQRG). A compositionally biased stretch (polar residues) spans 157–167 (SRSMSQEAQRG).

As to quaternary structure, interacts with MYOZ1, MYOZ2 and MYOZ3. Interacts with CSRP3. Interacts directly with the N-terminal Ig-like domains of 2 titin (TTN) molecules. Interacts with ANKRD2; the interaction is direct.

It is found in the cytoplasm. Its subcellular location is the myofibril. It localises to the sarcomere. In terms of biological role, muscle assembly regulating factor. Mediates the antiparallel assembly of titin (TTN) molecules at the sarcomeric Z-disk. The sequence is that of Telethonin (Tcap) from Mus musculus (Mouse).